A 279-amino-acid polypeptide reads, in one-letter code: B3 domain-containing protein Os11g0156000 (279 aa).

Residues 38-144 (FEKPLTPSDV…DRLFIGCRRR (107 aa)) constitute a DNA-binding region (TF-B3). 2 disordered regions span residues 148 to 182 (AAAQTPAPPPAVRVAPAAQNAGEQQPWSPMCYSTS) and 203 to 228 (HDHGDMHHADESPRDTDSPSFSAGSA). Over residues 159–168 (VRVAPAAQNA) the composition is skewed to low complexity. Residues 203–219 (HDHGDMHHADESPRDTD) show a composition bias toward basic and acidic residues.

It localises to the nucleus. This Oryza sativa subsp. japonica (Rice) protein is B3 domain-containing protein Os11g0156000.